Consider the following 139-residue polypeptide: Desampylase (139 aa).

The 134-residue stretch at 6-139 (LSLAADARDS…EFRELSVAVE (134 aa)) folds into the MPN domain. The active-site Proton donor/acceptor is the E31. H88, H90, and D101 together coordinate Zn(2+). The short motif at 88-101 (HSHPESDPVPSATD) is the JAMM motif element.

It belongs to the peptidase M67B family. Monomer. Requires Zn(2+) as cofactor.

It catalyses the reaction an N(6)-[small archaeal modifier protein]-[protein]-L-lysine + H2O = a [protein]-L-lysine + a [small archaeal modifier protein].. Its activity is regulated as follows. Inhibited by EDTA and N-ethylmaleimide (NEM) in vitro. Functionally, metalloprotease that displays desampylase (DSAMP) activity, cleaving ubiquitin-like small archaeal modifier proteins (SAMP1, SAMP2 and SAMP3) from protein conjugates (isopeptide- and linear-linked). Thus, likely regulates sampylation and the pools of 'free' SAMP available for protein modification. Functions as a specific and not a general protease since it is unable to hydrolyze a variety of unmodified proteins otherwise hydrolyzed by proteinase K. This is Desampylase from Haloferax volcanii (strain ATCC 29605 / DSM 3757 / JCM 8879 / NBRC 14742 / NCIMB 2012 / VKM B-1768 / DS2) (Halobacterium volcanii).